We begin with the raw amino-acid sequence, 603 residues long: DNA mismatch repair protein MutL (603 aa).

A compositionally biased stretch (basic and acidic residues) spans 336–346; that stretch reads EVSKKQKEQQK. The tract at residues 336-372 is disordered; it reads EVSKKQKEQQKSEQIQMSFEENRQPKEPPTLFSKPNI.

The protein belongs to the DNA mismatch repair MutL/HexB family.

This protein is involved in the repair of mismatches in DNA. It is required for dam-dependent methyl-directed DNA mismatch repair. May act as a 'molecular matchmaker', a protein that promotes the formation of a stable complex between two or more DNA-binding proteins in an ATP-dependent manner without itself being part of a final effector complex. This chain is DNA mismatch repair protein MutL, found in Listeria innocua serovar 6a (strain ATCC BAA-680 / CLIP 11262).